The primary structure comprises 3623 residues: Cubilin (3623 aa).

Residues 1–20 (MSSQFLWGFVTLLMIAELDG) form the signal peptide. A propeptide spans 21 to 32 (KTGKPEQRGQKR) (removed in mature form). The interaction with AMN stretch occupies residues 39–46 (PRMTTEEG). The N-linked (GlcNAc...) asparagine glycan is linked to N95. The EGF-like 1 domain maps to 129–165 (ERKVCSSNPCLNGGTCVNLHDSFVCICPSQWKGLFCS). 9 disulfides stabilise this stretch: C133-C144, C138-C153, C155-C164, C171-C187, C181-C196, C198-C207, C264-C277, C271-C286, and C289-C300. Residues 167–208 (DVNECVVYSGTPFGCQSGSTCVNTVGSFRCDCTPDTYGPQCA) enclose the EGF-like 2; calcium-binding domain. Residues 260–301 (DKDECSLQPSPCSEHAQCFNTQGSFYCGACPKGWQGNGYECQ) enclose the EGF-like 3; calcium-binding domain. Positions 302–345 (DINECEINNGGCSQAPLVPCLNTPGSFSCGNCPAGFSGDGRVCT) constitute an EGF-like 4; calcium-binding domain. EGF-like domains are found at residues 346–385 (PVDICSIHNGGCHPEATCSSSPVLGSFLPVCTCPPGYTGN) and 395–430 (LSNICSRHPCVNGQCIETVSSYFCKCDSGWSGQNCT). 13 disulfides stabilise this stretch: C350–C363, C357–C376, C399–C409, C404–C418, C420–C429, C436–C447, C441–C456, C458–C467, C474–C500, C527–C549, C590–C616, C643–C665, and C708–C734. The N-linked (GlcNAc...) asparagine glycan is linked to N428. An EGF-like 7; calcium-binding domain is found at 432 to 468 (NINDCSSNPCLNGGTCIDGINGFTCDCTSSWTGYYCQ). CUB domains are found at residues 474-586 (CGGI…WEAK), 590-702 (CGGI…YLTT), 708-816 (CGGN…YQVA), 817-928 (CGGM…FSSD), 932-1042 (CGEV…YEAI), 1048-1161 (CLYD…WDGS), 1165-1277 (CGGN…FRQR), 1278-1389 (CDNV…WFTH), 1391-1506 (CGGE…WRAV), 1510-1619 (CGGI…FREE), 1620-1734 (CGGR…YSAS), 1738-1850 (CGGS…FKNI), 1852-1963 (GNNN…WFAV), 1978-2091 (CGGF…FHKS), 2092-2213 (CGGY…YEAK), 2217-2334 (CGGT…YSIA), 2336-2448 (CGGT…FKSS), 2452-2565 (CGGD…YTST), 2570-2687 (CGGF…YSFT), 2689-2801 (CGGI…WTTN), 2805-2919 (CGGT…FISR), 2920-3035 (CGRT…YRAI), 3037-3150 (CGGI…FRET), 3157-3274 (CGGY…YTFV), 3278-3393 (CGGT…YQIA), 3395-3507 (CNRE…WTSS), and 3511-3623 (CGGT…MWSS). A glycan (N-linked (GlcNAc...) asparagine) is linked at N491. N-linked (GlcNAc...) asparagine glycans are attached at residues N711 and N749. Cysteines 761 and 779 form a disulfide. Residue N781 is glycosylated (N-linked (GlcNAc...) asparagine). C817 and C842 are oxidised to a cystine. A glycan (N-linked (GlcNAc...) asparagine) is linked at N857. 2 disulfides stabilise this stretch: C869-C891 and C932-C958. The N-linked (GlcNAc...) asparagine glycan is linked to N957. E980 provides a ligand contact to Ca(2+). A glycan (N-linked (GlcNAc...) asparagine) is linked at N984. C985 and C1005 form a disulfide bridge. Positions 988, 1027, and 1030 each coordinate Ca(2+). A disulfide bond links C1048 and C1074. Residues E1096, D1105, and D1146 each coordinate Ca(2+). C1165 and C1191 form a disulfide bridge. N-linked (GlcNAc...) asparagine glycosylation is present at N1168. The Ca(2+) site is built by E1213, D1221, D1262, G1264, and Q1265. C1218 and C1240 are oxidised to a cystine. A disulfide bridge connects residues C1278 and C1306. N-linked (GlcNAc...) asparagine glycosylation is found at N1285, N1307, and N1319. E1328 lines the Ca(2+) pocket. N1332 carries N-linked (GlcNAc...) asparagine glycosylation. The cysteines at positions 1333 and 1351 are disulfide-linked. Residues D1336, D1373, and I1375 each coordinate Ca(2+). 2 cysteine pairs are disulfide-bonded: C1391-C1417 and C1444-C1466. Residue N1500 is glycosylated (N-linked (GlcNAc...) asparagine). An intrachain disulfide couples C1510 to C1536. Residues N1551, N1646, and N1671 are each glycosylated (N-linked (GlcNAc...) asparagine). C1620 and C1647 form a disulfide bridge. Intrachain disulfides connect C1675/C1697, C1738/C1764, and C1791/C1812. N-linked (GlcNAc...) asparagine glycans are attached at residues N1802 and N1819. Disulfide bonds link C1905-C1927, C1978-C2006, and C2032-C2054. N-linked (GlcNAc...) asparagine glycosylation is found at N2085 and N2117. 2 disulfides stabilise this stretch: C2092–C2118 and C2217–C2247. N-linked (GlcNAc...) asparagine glycosylation occurs at N2274. Intrachain disulfides connect C2275–C2297, C2336–C2363, C2390–C2411, C2452–C2478, and C2505–C2527. Residue N2400 is glycosylated (N-linked (GlcNAc...) asparagine). Residues N2531, N2581, and N2610 are each glycosylated (N-linked (GlcNAc...) asparagine). A disulfide bond links C2570 and C2599. Disulfide bonds link C2628-C2649, C2689-C2715, C2742-C2764, C2805-C2831, C2860-C2883, C2920-C2946, and C2977-C2999. N-linked (GlcNAc...) asparagine glycans are attached at residues N2813, N2875, N2945, and N2989. The residue at position 3008 (T3008) is a Phosphothreonine. 2 cysteine pairs are disulfide-bonded: C3037–C3064 and C3091–C3113. Residues N3042, N3106, N3125, and N3165 are each glycosylated (N-linked (GlcNAc...) asparagine). 2 disulfides stabilise this stretch: C3157–C3185 and C3215–C3237. N3268, N3283, and N3290 each carry an N-linked (GlcNAc...) asparagine glycan. Cystine bridges form between C3278-C3306 and C3332-C3354. N3357, N3400, and N3430 each carry an N-linked (GlcNAc...) asparagine glycan. C3395 and C3421 are disulfide-bonded. Cystine bridges form between C3448–C3470, C3511–C3537, and C3564–C3586. N3533 carries an N-linked (GlcNAc...) asparagine glycan.

As to quaternary structure, interacts with AMN. Component of the cubam complex composed of one CUBN trimer and one AMN chain. The cubam complex can dimerize. Interacts with LRP2 in a dual-receptor complex in a calcium-dependent manner. Found in a complex with PID1/PCLI1, LRP1 and CUBNI. Interacts with LRP1 and PID1/PCLI1. The precursor is cleaved by a trans-Golgi proteinase furin, removing a propeptide. In terms of processing, N-glycosylated. As to expression, expressed to intestinal, renal and yalk sac apical membranes. In kidney, expressed in the proximal tubule.

Its subcellular location is the cell membrane. It localises to the endosome membrane. The protein resides in the lysosome membrane. In terms of biological role, endocytic receptor which plays a role in lipoprotein, vitamin and iron metabolism by facilitating their uptake. Acts together with LRP2 to mediate endocytosis of high-density lipoproteins, GC, hemoglobin, ALB, TF and SCGB1A1. Acts together with AMN to mediate endocytosis of the CBLIF-cobalamin complex. Binds to ALB, MB, Kappa and lambda-light chains, TF, hemoglobin, GC, SCGB1A1, APOA1, high density lipoprotein, and the CBLIF-cobalamin complex. Ligand binding requires calcium. Serves as important transporter in several absorptive epithelia, including intestine, renal proximal tubules and embryonic yolk sac. May play an important role in the development of the peri-implantation embryo through internalization of APOA1 and cholesterol. Binds to LGALS3 at the maternal-fetal interface. This Rattus norvegicus (Rat) protein is Cubilin (Cubn).